The chain runs to 363 residues: UDP-3-O-acylglucosamine N-acyltransferase (363 aa).

Catalysis depends on His-252, which acts as the Proton acceptor.

This sequence belongs to the transferase hexapeptide repeat family. LpxD subfamily. Homotrimer.

The catalysed reaction is a UDP-3-O-[(3R)-3-hydroxyacyl]-alpha-D-glucosamine + a (3R)-hydroxyacyl-[ACP] = a UDP-2-N,3-O-bis[(3R)-3-hydroxyacyl]-alpha-D-glucosamine + holo-[ACP] + H(+). The protein operates within bacterial outer membrane biogenesis; LPS lipid A biosynthesis. Catalyzes the N-acylation of UDP-3-O-acylglucosamine using 3-hydroxyacyl-ACP as the acyl donor. Is involved in the biosynthesis of lipid A, a phosphorylated glycolipid that anchors the lipopolysaccharide to the outer membrane of the cell. The protein is UDP-3-O-acylglucosamine N-acyltransferase of Cupriavidus necator (strain ATCC 17699 / DSM 428 / KCTC 22496 / NCIMB 10442 / H16 / Stanier 337) (Ralstonia eutropha).